Reading from the N-terminus, the 87-residue chain is MAMRFLNIGYGNIVSAHRIIAIVSPESAPIKRTVQEAREHNALLDATYGRKTRAVIVMDDGHVVLSPIQPETIAHRLNNKEDLSEEG.

The protein belongs to the RemA family.

This is Putative regulatory protein BCG9842_B1272 from Bacillus cereus (strain G9842).